The sequence spans 192 residues: MFEYLKGIVTKIDPAYIVLDVNGVGYKILCPTPYSYDENQPATIYVEQVVRDTGITLYGFLSLEDKELFLKLLSVSGIGPKSAVAIMAAEDTDSLASAIQNGEVKYLTRFPGVGKKTASQIVLDLKGKLGDYVKKSTAAADLTPSLQDALLALVALGYTQKEVDRITPKLAKLPENTADGYVKEALALLLKK.

Positions 1-61 are domain I; sequence MFEYLKGIVT…DTGITLYGFL (61 aa). Residues 62–137 are domain II; that stretch reads SLEDKELFLK…KLGDYVKKST (76 aa). The tract at residues 137–140 is flexible linker; it reads TAAA. Positions 141 to 192 are domain III; sequence DLTPSLQDALLALVALGYTQKEVDRITPKLAKLPENTADGYVKEALALLLKK.

This sequence belongs to the RuvA family. As to quaternary structure, homotetramer. Forms an RuvA(8)-RuvB(12)-Holliday junction (HJ) complex. HJ DNA is sandwiched between 2 RuvA tetramers; dsDNA enters through RuvA and exits via RuvB. An RuvB hexamer assembles on each DNA strand where it exits the tetramer. Each RuvB hexamer is contacted by two RuvA subunits (via domain III) on 2 adjacent RuvB subunits; this complex drives branch migration. In the full resolvosome a probable DNA-RuvA(4)-RuvB(12)-RuvC(2) complex forms which resolves the HJ.

Its subcellular location is the cytoplasm. In terms of biological role, the RuvA-RuvB-RuvC complex processes Holliday junction (HJ) DNA during genetic recombination and DNA repair, while the RuvA-RuvB complex plays an important role in the rescue of blocked DNA replication forks via replication fork reversal (RFR). RuvA specifically binds to HJ cruciform DNA, conferring on it an open structure. The RuvB hexamer acts as an ATP-dependent pump, pulling dsDNA into and through the RuvAB complex. HJ branch migration allows RuvC to scan DNA until it finds its consensus sequence, where it cleaves and resolves the cruciform DNA. The chain is Holliday junction branch migration complex subunit RuvA from Lactobacillus johnsonii (strain CNCM I-12250 / La1 / NCC 533).